Reading from the N-terminus, the 290-residue chain is Enoyl-CoA hydratase, mitochondrial (290 aa).

The N-terminal 27 residues, 1-27, are a transit peptide targeting the mitochondrion; that stretch reads MATLRVLLSCVRGPLRPPVRCPAWRPF. Position 46 is a phosphothreonine (Thr46). A substrate-binding site is contributed by 98–101; that stretch reads ADIK. Lys101 carries the post-translational modification N6-acetyllysine; alternate. Lys101 is subject to N6-succinyllysine; alternate. Position 114 is a phosphoserine (Ser114). At Lys115 the chain carries N6-acetyllysine; alternate. Lys115 carries the N6-succinyllysine; alternate modification. Lys118 is modified (N6-acetyllysine). Gly141 lines the substrate pocket. Position 204 is an N6-succinyllysine (Lys204). Lys211 bears the N6-acetyllysine mark.

The protein belongs to the enoyl-CoA hydratase/isomerase family. Homohexamer; dimer of trimers.

It is found in the mitochondrion matrix. It catalyses the reaction a (3S)-3-hydroxyacyl-CoA = a (2E)-enoyl-CoA + H2O. The catalysed reaction is a (3E)-enoyl-CoA = a 4-saturated (2E)-enoyl-CoA. The enzyme catalyses (3E)-hexenoyl-CoA = (2E)-hexenoyl-CoA. It carries out the reaction (3S)-3-hydroxybutanoyl-CoA = (2E)-butenoyl-CoA + H2O. It catalyses the reaction 3-hydroxyisovaleryl-CoA = 3-methylbut-2-enoyl-CoA + H2O. The catalysed reaction is 3-hydroxypropanoyl-CoA = acryloyl-CoA + H2O. The enzyme catalyses 3-hydroxybutanoyl-CoA = (2E)-butenoyl-CoA + H2O. It carries out the reaction 2-methylpropenoyl-CoA + H2O = (S)-3-hydroxyisobutanoyl-CoA. It catalyses the reaction (3S)-hydroxyhexanoyl-CoA = (2E)-hexenoyl-CoA + H2O. The catalysed reaction is (3S)-hydroxydecanoyl-CoA = (2E)-decenoyl-CoA + H2O. Its pathway is lipid metabolism; fatty acid beta-oxidation. Functionally, converts unsaturated trans-2-enoyl-CoA species ((2E)-enoyl-CoA) to the corresponding (3S)-3-hydroxyacyl-CoA species through addition of a water molecule to the double bond. Catalyzes the hydration of medium- and short-chained fatty enoyl-CoA thioesters from 4 carbons long (C4) up to C16. Has high substrate specificity for crotonyl-CoA ((2E)-butenoyl-CoA) and moderate specificity for acryloyl-CoA, 3-methylcrotonyl-CoA (3-methyl-(2E)-butenoyl-CoA) and methacrylyl-CoA ((2E)-2-methylpropenoyl-CoA). Can bind tiglyl-CoA (2-methylcrotonoyl-CoA), but hydrates only a small amount of this substrate. Plays a key role in the beta-oxidation spiral of short- and medium-chain fatty acid oxidation. At a lower rate than the hydratase reaction, catalyzes the isomerase reaction of trans-3-enoyl-CoA species (such as (3E)-hexenoyl-CoA) to trans-2-enoyl-CoA species (such as (2E)-hexenoyl-CoA), which are subsequently hydrated to 3(S)-3-hydroxyacyl-CoA species (such as (3S)-hydroxyhexanoyl-CoA). The protein is Enoyl-CoA hydratase, mitochondrial (ECHS1) of Pongo abelii (Sumatran orangutan).